Reading from the N-terminus, the 565-residue chain is Nephronectin (565 aa).

Residues 1-19 (MDFLLALVLVSSLYLQAAA) form the signal peptide. The region spanning 52–87 (SWGQCQPVCQPRCKHGECIGPNKCKCHPGYAGKTCN) is the EGF-like 1 domain. Disulfide bonds link Cys56–Cys69, Cys60–Cys75, Cys77–Cys86, Cys93–Cys104, Cys100–Cys113, and Cys115–Cys127. Residues 89–128 (DLNECGLKPRPCKHRCMNTYGSYKCYCLNGYMLMPDGSCS) enclose the EGF-like 2; calcium-binding domain. In terms of domain architecture, EGF-like 3 spans 132–168 (TCSMANCQYGCDVVKGQIRCQCPSPGLQLAPDGRTCV). An EGF-like 4; calcium-binding domain is found at 169-213 (DVDECATGRASCPRFRQCVNTFGSYICKCHKGFDLMYIGGKYQCH). 6 disulfides stabilise this stretch: Cys173–Cys186, Cys180–Cys195, Cys197–Cys212, Cys218–Cys231, Cys225–Cys240, and Cys242–Cys253. The region spanning 214–254 (DIDECSLGQYQCSSFARCYNIRGSYKCKCKEGYQGDGLTCV) is the EGF-like 5; calcium-binding domain. The segment at 301 to 389 (YIPPIITNRP…KPRGDVFIPR (89 aa)) is disordered. Over residues 304–316 (PIITNRPTSKPTT) the composition is skewed to low complexity. Residues 317 to 347 (RPTPKPTPIPTPPPPPPLPTELRTPLPPTTP) are compositionally biased toward pro residues. The short motif at 382–384 (RGD) is the Integrin interaction element. The region spanning 420–563 (HSCNFDHGLC…VSLKKGHCSE (144 aa)) is the MAM domain.

It belongs to the nephronectin family. As to quaternary structure, homodimer and homotrimer. In terms of tissue distribution, expressed in kidney and lung and to a lower extent in brain, pregnant uterus, placenta, thyroid gland and blood vessels.

It localises to the secreted. Its subcellular location is the extracellular space. The protein localises to the extracellular matrix. Functional ligand of integrin alpha-8/beta-1 in kidney development. Regulates the expression of GDNF with integrin alpha-8/beta-1 which is essential for kidney development. May also play a role in the development and function of various tissues, regulating cell adhesion, spreading and survival through the binding of several integrins. The sequence is that of Nephronectin (NPNT) from Homo sapiens (Human).